The following is a 298-amino-acid chain: Esterase Rv0045c (298 aa).

The Nucleophile role is filled by Ser122. Catalysis depends on residues Asp146 and His277.

This sequence belongs to the AB hydrolase superfamily. As to quaternary structure, monomer.

The enzyme catalyses a carboxylic ester + H2O = an alcohol + a carboxylate + H(+). It carries out the reaction a butanoate ester + H2O = an aliphatic alcohol + butanoate + H(+). The catalysed reaction is an acetyl ester + H2O = an aliphatic alcohol + acetate + H(+). It catalyses the reaction a hexanoate ester + H2O = an aliphatic alcohol + hexanoate + H(+). The enzyme catalyses a tetradecanoate ester + H2O = an aliphatic alcohol + tetradecanoate + H(+). Its activity is regulated as follows. Hydrolysis of a fluorogenic ester substrate (MOAME) is allosterically inhibited by divalent transition metal cations (Cu(2+), Zn(2+), Ni(2+) and Co(2+)). Inhibition is largely due to a two order of magnitude drop in kcat, with relatively little change in KM. The thermal stability decreases with increasing concentrations of Ni(2+). Functionally, esterase likely involved in ester/lipid metabolism. Shows strong substrate selectivity toward short, straight chain alkyl esters with the highest activity toward four atom chains. The physiological substrate is unknown. Is able to hydrolyze ester bonds within a wide range of p-nitrophenyl derivatives (C2-C14) in vitro. The sequence is that of Esterase Rv0045c from Mycobacterium tuberculosis (strain ATCC 25618 / H37Rv).